The chain runs to 423 residues: Protein CLP1 homolog (423 aa).

Residues glutamate 19, lysine 60, and 122 to 127 (DVGKTT) each bind ATP.

It belongs to the Clp1 family. Clp1 subfamily.

The protein localises to the nucleus. In terms of biological role, required for endonucleolytic cleavage during polyadenylation-dependent pre-mRNA 3'-end formation. In Anopheles gambiae (African malaria mosquito), this protein is Protein CLP1 homolog (cbc).